We begin with the raw amino-acid sequence, 213 residues long: Octanoyltransferase (213 aa).

In terms of domain architecture, BPL/LPL catalytic spans 36–211 (TNTPDEIWLV…KFCQQLGFKL (176 aa)). Residues 75–82 (RGGQVTYH), 142–144 (SLG), and 155–157 (GLA) contribute to the substrate site. Cys-173 acts as the Acyl-thioester intermediate in catalysis.

The protein belongs to the LipB family.

It is found in the cytoplasm. It carries out the reaction octanoyl-[ACP] + L-lysyl-[protein] = N(6)-octanoyl-L-lysyl-[protein] + holo-[ACP] + H(+). Its pathway is protein modification; protein lipoylation via endogenous pathway; protein N(6)-(lipoyl)lysine from octanoyl-[acyl-carrier-protein]: step 1/2. In terms of biological role, catalyzes the transfer of endogenously produced octanoic acid from octanoyl-acyl-carrier-protein onto the lipoyl domains of lipoate-dependent enzymes. Lipoyl-ACP can also act as a substrate although octanoyl-ACP is likely to be the physiological substrate. In Photorhabdus laumondii subsp. laumondii (strain DSM 15139 / CIP 105565 / TT01) (Photorhabdus luminescens subsp. laumondii), this protein is Octanoyltransferase.